A 144-amino-acid chain; its full sequence is 3-dehydroquinate dehydratase (144 aa).

Tyr-24 functions as the Proton acceptor in the catalytic mechanism. 3 residues coordinate substrate: Asn-73, His-79, and Asp-86. The Proton donor role is filled by His-99. Substrate contacts are provided by residues 100–101 (LS) and Arg-110.

Belongs to the type-II 3-dehydroquinase family. In terms of assembly, homododecamer.

The enzyme catalyses 3-dehydroquinate = 3-dehydroshikimate + H2O. Its pathway is metabolic intermediate biosynthesis; chorismate biosynthesis; chorismate from D-erythrose 4-phosphate and phosphoenolpyruvate: step 3/7. Its function is as follows. Catalyzes a trans-dehydration via an enolate intermediate. The chain is 3-dehydroquinate dehydratase from Shewanella sp. (strain MR-4).